The chain runs to 381 residues: Major structural protein ORF14 (381 aa).

Residues 287–307 (RQFKEKLNQEKDEKKRSINKE) are a coiled coil.

The polypeptide is Major structural protein ORF14 (Helicobacter pylori (strain 35A)).